A 308-amino-acid polypeptide reads, in one-letter code: Probable manganese-dependent inorganic pyrophosphatase (308 aa).

Mn(2+) contacts are provided by His-9, Asp-13, Asp-15, Asp-75, His-97, and Asp-149.

It belongs to the PPase class C family. Mn(2+) serves as cofactor.

The protein resides in the cytoplasm. The enzyme catalyses diphosphate + H2O = 2 phosphate + H(+). The chain is Probable manganese-dependent inorganic pyrophosphatase from Staphylococcus carnosus (strain TM300).